Consider the following 462-residue polypeptide: A-type ATP synthase subunit B (462 aa).

It belongs to the ATPase alpha/beta chains family. Has multiple subunits with at least A(3), B(3), C, D, E, F, H, I and proteolipid K(x).

It localises to the cell membrane. Component of the A-type ATP synthase that produces ATP from ADP in the presence of a proton gradient across the membrane. The B chain is a regulatory subunit. In Methanobrevibacter smithii (strain ATCC 35061 / DSM 861 / OCM 144 / PS), this protein is A-type ATP synthase subunit B.